The chain runs to 205 residues: uncharacterized protein (205 aa).

3 consecutive transmembrane segments (helical) span residues 45-65 (LFFYFFANFFTNSFIVQFLVI), 119-139 (VFWLGLVVGPAAWIFFVVTAF), and 144-164 (FEWMIVALLGALMNMANLWGY).

This sequence belongs to the TVP23 family.

The protein localises to the membrane. This is an uncharacterized protein from Caenorhabditis elegans.